The following is a 355-amino-acid chain: Syntaxin-5 (355 aa).

The Cytoplasmic portion of the chain corresponds to 1–333 (MIPRKRYGSK…KYFQSVTSNR (333 aa)). Positions 245–247 (IDM) match the IxM motif; signal for cargo packaging into COPII-coated vesicles motif. One can recognise a t-SNARE coiled-coil homology domain in the interval 263–325 (DSYIQSRADT…EAAHSEILKY (63 aa)). A coiled-coil region spans residues 287 to 318 (FQQLAHMVKEQEETIQRIDENVLGAQLDVEAA). A helical; Anchor for type IV membrane protein transmembrane segment spans residues 334–354 (WLMVKIFLILIVFFIIFVVFL). A topological domain (vesicular) is located at residue alanine 355.

Belongs to the syntaxin family. As to quaternary structure, part of a ternary complex containing STX5A, NSFL1C and VCP. Part of a unique SNARE complex composed of the Golgi SNAREs GOSR1, GOSR2 and YKT6. This complex also includes VTI1A. Component of a SNARE complex consisting of STX5, YKT6, GOSR1 and BET1L. Interacts with BET1L. Interacts with BET1. Interacts with COG4. Interacts with GM130/GOLGA2. Interacts (via IxM motif) with SEC24C and SEC24D; mediates STX5 packaging into COPII-coated vesicles. Interacts with VLDLR; this interaction mediates VLDLR translocation from the endoplasmic reticulum to the plasma membrane. In terms of tissue distribution, expressed in the brain, heart, spleen, lung, liver, kidney and testis.

Its subcellular location is the endoplasmic reticulum-Golgi intermediate compartment membrane. The protein resides in the golgi apparatus membrane. Its function is as follows. Mediates endoplasmic reticulum to Golgi transport. Together with p115/USO1 and GM130/GOLGA2, involved in vesicle tethering and fusion at the cis-Golgi membrane to maintain the stacked and inter-connected structure of the Golgi apparatus. In terms of biological role, required for Golgi to endoplasmic reticulum retrogade transport, and for intra-Golgi transport. The protein is Syntaxin-5 (Stx5) of Rattus norvegicus (Rat).